Reading from the N-terminus, the 95-residue chain is MSYTINAVTRTEIGKGSSRRLRHAGKVPAVIYGPGKEPVSIKFEHKDIINIQLNDDFYTTDLTVSIEGKEVKVRVKAIQRHAFKQLVEHIDFMFA.

It belongs to the bacterial ribosomal protein bL25 family. In terms of assembly, part of the 50S ribosomal subunit; part of the 5S rRNA/L5/L18/L25 subcomplex. Contacts the 5S rRNA. Binds to the 5S rRNA independently of L5 and L18.

In terms of biological role, this is one of the proteins that binds to the 5S RNA in the ribosome where it forms part of the central protuberance. The protein is Large ribosomal subunit protein bL25 of Shewanella frigidimarina (strain NCIMB 400).